Reading from the N-terminus, the 230-residue chain is Large ribosomal subunit protein uL1 (230 aa).

The protein belongs to the universal ribosomal protein uL1 family. As to quaternary structure, part of the 50S ribosomal subunit.

Functionally, binds directly to 23S rRNA. The L1 stalk is quite mobile in the ribosome, and is involved in E site tRNA release. Protein L1 is also a translational repressor protein, it controls the translation of the L11 operon by binding to its mRNA. The sequence is that of Large ribosomal subunit protein uL1 from Paramagnetospirillum magneticum (strain ATCC 700264 / AMB-1) (Magnetospirillum magneticum).